A 616-amino-acid polypeptide reads, in one-letter code: Zinc metalloproteinase-disintegrin-like protein H3 (616 aa).

The first 20 residues, 1 to 20 (MIQVLLVIICLAVFPYQGSS), serve as a signal peptide directing secretion. A propeptide spanning residues 21–193 (IILESGNVND…KKASQLNLTP (173 aa)) is cleaved from the precursor. At E194 the chain carries Pyrrolidone carboxylic acid (Glu). The Peptidase M12B domain maps to 203 to 399 (KYIKLVIVAD…KMPQCILNKP (197 aa)). Cystine bridges form between C314/C394, C354/C378, and C356/C361. H339 serves as a coordination point for Zn(2+). A Metal-binding motif is present at residues 339-350 (HEMGHNLGMDHD). E340 functions as the Proton acceptor in the catalytic mechanism. Positions 343 and 349 each coordinate Zn(2+). N377 carries an N-linked (GlcNAc...) asparagine glycan. The 87-residue stretch at 407–493 (PAVCGNYLVE…ECPTDQFQRN (87 aa)) folds into the Disintegrin domain. Ca(2+)-binding residues include V409, N412, E416, E419, and D422. Intrachain disulfides connect C410-C439, C421-C434, C423-C429, C433-C456, C447-C453, C452-C478, C465-C485, C472-C504, C497-C509, C516-C566, C531-C577, C544-C554, C561-C603, and C597-C609. A D/ECD-tripeptide motif is present at residues 471 to 473 (ECD). The Ca(2+) site is built by D473, D476, and D488. N506 is a glycosylation site (N-linked (GlcNAc...) asparagine).

The protein belongs to the venom metalloproteinase (M12B) family. P-III subfamily. P-IIIc sub-subfamily. Homodimer; disulfide-linked. It depends on Zn(2+) as a cofactor. In terms of processing, N-glycosylated. The N-terminus is blocked. Expressed by the venom gland (at protein level). Expressed by the venom gland.

The protein resides in the secreted. Its activity is regulated as follows. The proteolytic activity requires Zn(2+) and Ca(2+) ions. The alpha-fibrinogenase activity is completely inhibited by EDTA, but not by PMSF. Functionally, zinc metalloprotease that has fibrinogenolytic and hemorrhagic activities. Cleaves insulin B chain readily at '38-Ala-|-Leu-39' bond, and at a significantly slower rate, at '40-Tyr-|-Leu-41' bond. Hydrolyzes isolated extracellular matrix (ECM) bovine fibronectin, and basal membrane (BM) proteins human collagen IV and, to a lesser extent, murine laminin, in vitro. Cleaves murine nidogen (at '350-Ser-|-Phe-351' and '380-Tyr-|-Asn-381' bonds), but not laminin, in a solubilized BM preparation. Hydrolyzes plasma proteins involved in blood coagulation in vitro. It significantly prolongs thrombin time. Has potent alpha-fibrinogenase activity cleaving human fibrinogen alpha chain at '432-Lys-|-Leu-433' bond, but does not cleave beta or gamma chains. Hydrolyzes bovine prothrombin, but does not cleave it at '366-Arg-|-Ile-367' bond, which is necessary for the formation of active alpha-thrombin, however, the cleavage of fragment 1 from it leads to reduced alpha-thrombin formation. Hydrolyzes bovine factor X heavy chain at '211-Ser-|-Leu-212', '213-Asp-|-Leu-214' and '216-Gly-|-Leu-217' bonds activating it only marginally as does not cleave at the physiological activation site. Does not cleave factor X light chain. No hydrolysis or activation of plasminogen. The alpha-fibrinogenase activity likely contributes to its hemorrhagic activity, which in rat can be completely neutralized in vivo by anti-ammodytagin antibodies, which strongly cross-react with this protein. Has very weak collagen-, ADP- and ristocetin-induced platelet aggregation inhibition activity in vitro. This chain is Zinc metalloproteinase-disintegrin-like protein H3, found in Vipera ammodytes ammodytes (Western sand viper).